The sequence spans 150 residues: Large ribosomal subunit protein bL9 (150 aa).

Belongs to the bacterial ribosomal protein bL9 family.

In terms of biological role, binds to the 23S rRNA. The sequence is that of Large ribosomal subunit protein bL9 from Streptococcus equi subsp. zooepidemicus (strain MGCS10565).